The primary structure comprises 154 residues: SsrA-binding protein (154 aa).

This sequence belongs to the SmpB family.

It is found in the cytoplasm. Required for rescue of stalled ribosomes mediated by trans-translation. Binds to transfer-messenger RNA (tmRNA), required for stable association of tmRNA with ribosomes. tmRNA and SmpB together mimic tRNA shape, replacing the anticodon stem-loop with SmpB. tmRNA is encoded by the ssrA gene; the 2 termini fold to resemble tRNA(Ala) and it encodes a 'tag peptide', a short internal open reading frame. During trans-translation Ala-aminoacylated tmRNA acts like a tRNA, entering the A-site of stalled ribosomes, displacing the stalled mRNA. The ribosome then switches to translate the ORF on the tmRNA; the nascent peptide is terminated with the 'tag peptide' encoded by the tmRNA and targeted for degradation. The ribosome is freed to recommence translation, which seems to be the essential function of trans-translation. This Methylobacillus flagellatus (strain ATCC 51484 / DSM 6875 / VKM B-1610 / KT) protein is SsrA-binding protein.